The sequence spans 288 residues: Urease accessory protein UreD (288 aa).

This sequence belongs to the UreD family. As to quaternary structure, ureD, UreF and UreG form a complex that acts as a GTP-hydrolysis-dependent molecular chaperone, activating the urease apoprotein by helping to assemble the nickel containing metallocenter of UreC. The UreE protein probably delivers the nickel.

The protein localises to the cytoplasm. In terms of biological role, required for maturation of urease via the functional incorporation of the urease nickel metallocenter. The polypeptide is Urease accessory protein UreD (Dechloromonas aromatica (strain RCB)).